Here is a 207-residue protein sequence, read N- to C-terminus: Transcriptional regulator GfcR (207 aa).

It belongs to the purine/pyrimidine phosphoribosyltransferase family. GfcR subfamily.

The polypeptide is Transcriptional regulator GfcR (Methanocella arvoryzae (strain DSM 22066 / NBRC 105507 / MRE50)).